The sequence spans 641 residues: RING finger containing E3 ubiquitin-protein ligase WSV403 (641 aa).

Residues 329-371 (CVGCLYDIEDEKRCYKLPCGHFMHTFCLSNKCSKANFRCVKCF) form an RING-type; atypical zinc finger.

It carries out the reaction S-ubiquitinyl-[E2 ubiquitin-conjugating enzyme]-L-cysteine + [acceptor protein]-L-lysine = [E2 ubiquitin-conjugating enzyme]-L-cysteine + N(6)-ubiquitinyl-[acceptor protein]-L-lysine.. It functions in the pathway protein modification; protein ubiquitination. Functionally, probable E3 ubiquitin-protein ligase which accepts ubiquitin from an E2 ubiquitin-conjugating enzyme in the form of a thioester and then directly transfers the ubiquitin to targeted substrates. This chain is RING finger containing E3 ubiquitin-protein ligase WSV403, found in White spot syndrome virus (isolate Shrimp/China/Tongan/1996) (WSSV).